A 961-amino-acid chain; its full sequence is MAERGGAGGGPGGSGGGSSQRGSGVAQSPQQQPQQQPPQPQQPTPPKLAQATSSSSSTSAAAASSSSSSTSTSMAVAVASGSAPPGGPGPGRTPAPVQMNLYATWEVDRSSSSCVPRLFSLTLKKLVMLKEMDKDLNSVVIAVKLQGSKRILRSNEIILPASGLVETELQLTFSLQYPHFLKRDANKLQIMLQRRKRYKNRTILGYKTLAVGLINMAEVMQHPNEGALVLGLHSNVKDVSVPVAEIKIYSLSSQPIDHEGIKSKLSDRSPDIDNYSEEEEESFSSEQEGSDDPLHGQDLFYEDEDLRKVKKTRRKLTSTSAITRQPNIKQKFVALLKRFKVSDEVGFGLEHVSREQIREVEEDLDELYDSLEMYNPSDSGPEMEETESILSTPKPKLKPFFEGMSQSSSQTEIGSLNSKGSLGKDTTSPMELAALEKVKSTWIKNQDDSLTETDTLEITDQDMFGDVSTSLVVPEKVKTPMKSSKADLQGSASPSKVEGTHTPRQKRSTPLKERQLSKPLSERTNSSDSERSPDLGHSTQIPRKVVYDQLNQILVSDAALPENVILVNTTDWQGQYVAELLQDQRKPVVCTCSTVEVQAVLSALLTRIQRYCNCNSSMPRPVKVAAVGSQSYLSSILRFFVKSLASKTPDWLGYMRFLIIPLGSHPVAKYLGSVDSRYSSTFLDSAWRDLFSRSEPPVSEPLDVVGRVMQYVNGATTTHQLPVAEAMLTCRHKFPDEDSYQKFIPFIGVVKVGLVEDSPSTAGDGDDSPVVSLTVPSTSPPSSSGLSRDATATPPSSPSMSSALAIVGSPNSPYGDVIGLQVDYWLGHPGERRREGDKRDASSKNTLKSVFRSVQVSRLPHAGEAQLSGTMAMTVVTKEKNKKVPTIFLSKKPREKEVDSKSQVIEGISRLICSAKQQQTMLRVSIDGVEWSDIKFFQLAAQWPTHVKHFPVGLFSGSKTT.

A compositionally biased stretch (gly residues) spans 1-19; it reads MAERGGAGGGPGGSGGGSS. Disordered stretches follow at residues 1–70 and 76–95; these read MAER…SSST and VAVASGSAPPGGPGPGRTPA. At A2 the chain carries N-acetylalanine. Residues 20-34 show a composition bias toward low complexity; the sequence is QRGSGVAQSPQQQPQ. Position 28 is a phosphoserine (S28). Over residues 35 to 46 the composition is skewed to pro residues; the sequence is QQPPQPQQPTPP. T44 bears the Phosphothreonine mark. Over residues 51 to 70 the composition is skewed to low complexity; it reads ATSSSSSTSAAAASSSSSST. Residue Y249 is modified to Phosphotyrosine. A compositionally biased stretch (basic and acidic residues) spans 260 to 271; sequence GIKSKLSDRSPD. Disordered stretches follow at residues 260 to 297 and 375 to 426; these read GIKSKLSDRSPDIDNYSEEEEESFSSEQEGSDDPLHGQ and NPSD…GKDT. Over residues 274–291 the composition is skewed to acidic residues; that stretch reads NYSEEEEESFSSEQEGSD. The stretch at 351–375 forms a coiled coil; it reads HVSREQIREVEEDLDELYDSLEMYN. Residues S377 and S379 each carry the phosphoserine modification. Residues 404 to 426 show a composition bias toward polar residues; the sequence is MSQSSSQTEIGSLNSKGSLGKDT. S428 and S493 each carry phosphoserine. Disordered regions lie at residues 475-540 and 758-802; these read EKVK…HSTQ and SPST…SMSS. T502 carries the post-translational modification Phosphothreonine. Phosphoserine occurs at positions 517, 526, 527, 529, and 532. Residues 768-802 are compositionally biased toward low complexity; sequence SPVVSLTVPSTSPPSSSGLSRDATATPPSSPSMSS.

Belongs to the PACS family. As to quaternary structure, associates with AP-1 and AP-3 but not with AP-2 complexes. Interacts with FURIN. Forms a ternary complex with FURIN and AP-1. Interacts with PKD2 (via acidic region). Interacts with SORL1. Interacts with WDR37.

It localises to the golgi apparatus. Its subcellular location is the trans-Golgi network. Coat protein that is involved in the localization of trans-Golgi network (TGN) membrane proteins that contain acidic cluster sorting motifs. Controls the endosome-to-Golgi trafficking of furin and mannose-6-phosphate receptor by connecting the acidic-cluster-containing cytoplasmic domain of these molecules with the adapter-protein complex-1 (AP-1) of endosomal clathrin-coated membrane pits. Required for normal ER Ca2+ handling in lymphocytes. Together with WDR37, it plays an essential role in lymphocyte development, quiescence and survival. Required for stabilizing peripheral lymphocyte populations. The protein is Phosphofurin acidic cluster sorting protein 1 (Pacs1) of Mus musculus (Mouse).